The following is an 83-amino-acid chain: Translation initiation factor IF-1 (83 aa).

The S1-like domain occupies methionine 1–leucine 72.

This sequence belongs to the IF-1 family. In terms of assembly, component of the 30S ribosomal translation pre-initiation complex which assembles on the 30S ribosome in the order IF-2 and IF-3, IF-1 and N-formylmethionyl-tRNA(fMet); mRNA recruitment can occur at any time during PIC assembly.

It localises to the cytoplasm. Functionally, one of the essential components for the initiation of protein synthesis. Stabilizes the binding of IF-2 and IF-3 on the 30S subunit to which N-formylmethionyl-tRNA(fMet) subsequently binds. Helps modulate mRNA selection, yielding the 30S pre-initiation complex (PIC). Upon addition of the 50S ribosomal subunit IF-1, IF-2 and IF-3 are released leaving the mature 70S translation initiation complex. This chain is Translation initiation factor IF-1, found in Verminephrobacter eiseniae (strain EF01-2).